The following is a 140-amino-acid chain: L-fucose mutarotase (140 aa).

The Proton donor role is filled by His22. Substrate contacts are provided by residues Asp30, Arg107, and 129–131; that span reads YGN.

It belongs to the RbsD / FucU family. FucU mutarotase subfamily. Homodecamer.

The protein resides in the cytoplasm. It carries out the reaction alpha-L-fucose = beta-L-fucose. It functions in the pathway carbohydrate metabolism; L-fucose metabolism. Functionally, involved in the anomeric conversion of L-fucose. The sequence is that of L-fucose mutarotase from Salmonella arizonae (strain ATCC BAA-731 / CDC346-86 / RSK2980).